Consider the following 62-residue polypeptide: U8-theraphotoxin-Cg1a 1 (62 aa).

Residues 1 to 21 (MKTLVLFIIFGLAALFLLSSA) form the signal peptide. The propeptide occupies 22-29 (NELEETER). Intrachain disulfides connect C31-C46, C38-C51, and C45-C58.

This sequence belongs to the neurotoxin 10 (Hwtx-1) family. 30 (Jztx-14) subfamily. As to expression, expressed by the venom gland.

The protein resides in the secreted. Functionally, probable ion channel inhibitor. The protein is U8-theraphotoxin-Cg1a 1 of Chilobrachys guangxiensis (Chinese earth tiger tarantula).